The chain runs to 877 residues: Alanine--tRNA ligase (877 aa).

Residues histidine 563, histidine 567, cysteine 667, and histidine 671 each coordinate Zn(2+).

Belongs to the class-II aminoacyl-tRNA synthetase family. Zn(2+) is required as a cofactor.

The protein localises to the cytoplasm. It carries out the reaction tRNA(Ala) + L-alanine + ATP = L-alanyl-tRNA(Ala) + AMP + diphosphate. Its function is as follows. Catalyzes the attachment of alanine to tRNA(Ala) in a two-step reaction: alanine is first activated by ATP to form Ala-AMP and then transferred to the acceptor end of tRNA(Ala). Also edits incorrectly charged Ser-tRNA(Ala) and Gly-tRNA(Ala) via its editing domain. This chain is Alanine--tRNA ligase, found in Cytophaga hutchinsonii (strain ATCC 33406 / DSM 1761 / CIP 103989 / NBRC 15051 / NCIMB 9469 / D465).